A 469-amino-acid polypeptide reads, in one-letter code: Probable lysophospholipase BODYGUARD 1 (469 aa).

The first 45 residues, 1-45, serve as a signal peptide directing secretion; the sequence is MGFSRSLNRTVGVFVFFILDIVDFLLCFTYKTLDFFFESEWKPCY. Cys46 is lipidated: N-palmitoyl cysteine. Residues 185 to 439 enclose the AB hydrolase-1 domain; it reads VVFIHGFLSS…IHVVPDKDHI (255 aa). The active site involves His189. The Nucleophile role is filled by Ser263. Residues Asp410 and His438 each act as charge relay system in the active site.

As to expression, expressed exclusively in protodermal and epidermal cells of all organs, especially on adaxial sides.

Its subcellular location is the cell membrane. The protein localises to the secreted. It localises to the cell wall. Functionally, controls cuticle development and morphogenesis, by promoting cutin and suberin monomers loading. Involved in the regulation of abscissic acid (ABA) biosynthesis in response to osmotic stress. Plays an important role in osmotic stress and drought resistance. Required to ensure a reduced permeability of aerial tissue, thus preventing transpiration. Regulates lateral root hair development. Its function is as follows. Required for infection by the pathogenic necrotrophic fungus Botrytis cinerea, probably by regulating structural traits of the cuticle. The protein is Probable lysophospholipase BODYGUARD 1 of Arabidopsis thaliana (Mouse-ear cress).